The sequence spans 60 residues: Metallothionein A (60 aa).

The beta stretch occupies residues 1-28 (MDPCQCSKSGTCNCGGSCTCTNCSCKSC). The a divalent metal cation site is built by Cys4, Cys6, Cys12, Cys14, Cys18, Cys20, Cys23, Cys25, Cys28, Cys32, Cys33, Cys35, Cys36, Cys40, Cys43, Cys47, Cys49, Cys54, Cys58, and Cys59. The interval 29-60 (KKSCCPCCPSGCTKCASGCVCKGKTCDTSCCQ) is alpha.

It belongs to the metallothionein superfamily. Type 1 family.

Functionally, metallothioneins have a high content of cysteine residues that bind various heavy metals. The polypeptide is Metallothionein A (mta) (Trematomus bernacchii (Emerald rockcod)).